Reading from the N-terminus, the 617-residue chain is uncharacterized protein (617 aa).

Low complexity-rich tracts occupy residues 1 to 16 (MSKC…SNSS) and 36 to 45 (STTSSNGSNS). Residues 1–49 (MSKCATPTPSTSSNSSDEAKRSPQPMSRGFPQRNMSTTSSNGSNSPRHR) form a disordered region. The next 3 helical transmembrane spans lie at 219–239 (LMIG…GGLA), 262–282 (TAGA…FTGY), and 427–447 (PITL…LLTM).

This sequence belongs to the TMCO4 family.

It localises to the membrane. This is an uncharacterized protein from Caenorhabditis elegans.